The chain runs to 241 residues: Small ribosomal subunit protein uS3c (241 aa).

Belongs to the universal ribosomal protein uS3 family. In terms of assembly, part of the 30S ribosomal subunit.

Its subcellular location is the plastid. In Helicosporidium sp. subsp. Simulium jonesii (Green alga), this protein is Small ribosomal subunit protein uS3c (rps3).